The following is a 119-amino-acid chain: Evasin P983 (119 aa).

A signal peptide spans 1–21; the sequence is MKASFCVIASCLVVFALKGTA. Intrachain disulfides connect cysteine 37/cysteine 59, cysteine 55/cysteine 97, cysteine 72/cysteine 102, and cysteine 92/cysteine 111. 2 N-linked (GlcNAc...) asparagine glycosylation sites follow: asparagine 48 and asparagine 67.

Its subcellular location is the secreted. Salivary chemokine-binding protein which binds to host chemokines CCL2, CCL3 and CCL8. The protein is Evasin P983 of Amblyomma cajennense (Cayenne tick).